Here is an 845-residue protein sequence, read N- to C-terminus: MAGLMLLSLMALLGLGAGAPLCLSRQLRMQGDYVLGGLFPLGTAEDTGLSDRTQPNATVCTRFSSLGLLWALAMKMAVEEVNNRSTLLPGLRLGYDLFDTCSEPVVAMKPSLMFMAKAGSCDIAAYCNYTQYQPRVLAVIGPHSSELALITGKFFSFFLMPQVSYGASTDRLSNRETFPSFFRTVSSDRVQAVAMVELLQELGWNWVAAVGSDDEYGRQGLSLFSSLANARGICIAHEGLVPLPHTSSLRLGTVQGLLHQVNQSSVQVVVLFSSTRAARTLFSYSIHCRLSPKVWVASEAWLTSDLVMTLPGMAEVGTVLGFLQQGAPIPEFPSYVQTCLALAADPAFCASLDAEQPGLEEHVVGPRCPQCDHVTLEAMSAGLLHHQTFAAYAAVYGVAQALHNTLLCNASGCPPREPVRPWQLLENMYNLTFRVRGLALQFDARGNVNMDYDLKLWVWRDLKPELRTVGAFNGRLKVWHSQMSWHTPGNQRPVSQCSRQCGEGQVRRVKGFHSCCYDCVDCKAGTYQRSPDDLLCTQCDQNQWSPDRSTRCFPRRLTFLAWGQPAVLVLLILLALALGLVLVALGLFIRHRDSPLVQASGGPRACFGLACLGLVCLSVLLFPGQPGPASCLAQQPLLHLPLTGCLSTLFLQAAQIFVGSELPSSWADQLRRCLQGPWAWLLVLLALLAEAALCAWYLVAFPPEVVTDWWVLPTQVLVHCRMRSWISFGLLHAINAMLAFLCFLGTFLVQSRPGRYNGARGLTFAMLAYFITWISFVPLFANVHVAYQPTVQMAAILLCALGILATFHLPKCYLLLQQLELNNPEFFLGDDARGQGSSGSGGKET.

An N-terminal signal peptide occupies residues 1–18; the sequence is MAGLMLLSLMALLGLGAG. At 19-568 the chain is on the extracellular side; sequence APLCLSRQLR…FLAWGQPAVL (550 aa). N-linked (GlcNAc...) asparagine glycans are attached at residues Asn-128 and Asn-262. Residues 569–589 traverse the membrane as a helical segment; the sequence is VLLILLALALGLVLVALGLFI. Over 590–601 the chain is Cytoplasmic; that stretch reads RHRDSPLVQASG. A helical membrane pass occupies residues 602-622; it reads GPRACFGLACLGLVCLSVLLF. The Extracellular segment spans residues 623–637; the sequence is PGQPGPASCLAQQPL. A helical transmembrane segment spans residues 638–658; sequence LHLPLTGCLSTLFLQAAQIFV. The Cytoplasmic portion of the chain corresponds to 659 to 680; sequence GSELPSSWADQLRRCLQGPWAW. Residues 681–701 form a helical membrane-spanning segment; it reads LLVLLALLAEAALCAWYLVAF. Topologically, residues 702 to 727 are extracellular; sequence PPEVVTDWWVLPTQVLVHCRMRSWIS. Residues 728-748 form a helical membrane-spanning segment; it reads FGLLHAINAMLAFLCFLGTFL. Residues 749–760 are Cytoplasmic-facing; the sequence is VQSRPGRYNGAR. Residues 761 to 781 form a helical membrane-spanning segment; sequence GLTFAMLAYFITWISFVPLFA. Residues 782-789 lie on the Extracellular side of the membrane; that stretch reads NVHVAYQP. The helical transmembrane segment at 790–810 threads the bilayer; the sequence is TVQMAAILLCALGILATFHLP. Residues 811-845 are Cytoplasmic-facing; that stretch reads KCYLLLQQLELNNPEFFLGDDARGQGSSGSGGKET.

This sequence belongs to the G-protein coupled receptor 3 family. TAS1R subfamily. Forms homodimers or heterodimers with TAS1R1 and TAS1R2.

It is found in the cell membrane. Its function is as follows. Putative taste receptor. TAS1R1/TAS1R3 responds to the umami taste stimulus (the taste of monosodium glutamate). TAS1R2/TAS1R3 recognizes diverse natural and synthetic sweeteners. TAS1R3 is essential for the recognition and response to the disaccharide trehalose. Sequence differences within and between species can significantly influence the selectivity and specificity of taste responses. The chain is Taste receptor type 1 member 3 (TAS1R3) from Canis lupus familiaris (Dog).